A 163-amino-acid chain; its full sequence is Neurotrophin-3 (163 aa).

The N-terminal stretch at 1-3 (IQS) is a signal peptide. Positions 4–119 (SSMDQGILTE…VLNRTSRRKR (116 aa)) are excised as a propeptide. Residues 36 to 61 (QTARTKDGMQTTVKKTEAEADARASQ) are disordered. Over residues 49–61 (KKTEAEADARASQ) the composition is skewed to basic and acidic residues. A glycan (N-linked (GlcNAc...) asparagine) is linked at N112.

The protein belongs to the NGF-beta family.

Its subcellular location is the secreted. Its function is as follows. Seems to promote the survival of visceral and proprioceptive sensory neurons. The protein is Neurotrophin-3 (NTF3) of Boa constrictor (Boa).